Here is a 910-residue protein sequence, read N- to C-terminus: Valine--tRNA ligase (910 aa).

The 'HIGH' region motif lies at 45–55; sequence PNVTGSLHMGH. Positions 554-558 match the 'KMSKS' region motif; sequence KMSKS. Lys557 provides a ligand contact to ATP. Residues 842 to 910 are a coiled coil; it reads DLQAEAARLA…TAESRIRDAS (69 aa).

The protein belongs to the class-I aminoacyl-tRNA synthetase family. ValS type 1 subfamily. In terms of assembly, monomer.

The protein localises to the cytoplasm. The enzyme catalyses tRNA(Val) + L-valine + ATP = L-valyl-tRNA(Val) + AMP + diphosphate. Catalyzes the attachment of valine to tRNA(Val). As ValRS can inadvertently accommodate and process structurally similar amino acids such as threonine, to avoid such errors, it has a 'posttransfer' editing activity that hydrolyzes mischarged Thr-tRNA(Val) in a tRNA-dependent manner. The sequence is that of Valine--tRNA ligase from Brucella suis biovar 1 (strain 1330).